We begin with the raw amino-acid sequence, 605 residues long: Hepatocyte nuclear factor 1-alpha-A (605 aa).

The segment at 1–31 is dimerization; it reads MASQLSYLQRELLQALLESGVTKEALKKALA. The region spanning 1-32 is the HNF-p1 domain; sequence MASQLSYLQRELLQALLESGVTKEALKKALAD. Residues 57-81 form a disordered region; that stretch reads QLPNGLGESHISEDESSDDGEDFTP. A POU-specific atypical domain is found at 85 to 180; sequence KELERLSPEE…IARLFTFTEF (96 aa). Interaction with DNA regions lie at residues 128–130, 141–147, 153–156, 206–209, 266–268, and 273–276; these read QRE, HLSQHLN, KTQK, RFKW, RVY, and NRRK. The Nuclear localization signal signature appears at 200-208; sequence KKMRRNRFK. A DNA-binding region (homeobox; HNF1-type) is located at residues 202–282; it reads MRRNRFKWGP…NRRKEEAFRH (81 aa). Residues 321–335 show a composition bias toward polar residues; it reads DRSAVMANSQSTPSP. Residues 321–343 form a disordered region; that stretch reads DRSAVMANSQSTPSPSALEPSHS. The tract at residues 448–453 is not present in other members of the HNF1 family; sequence PSHQLH.

It belongs to the HNF1 homeobox family. In terms of assembly, binds DNA as dimer. Forms a homodimer or heterodimer with HNF1-alpha-B. Potentially also form a heterodimer with HNF1-beta. As to expression, protein expressed in liver, stomach, small intestine, colon and kidney. Not expressed in spleen, lung, blood, heart muscle, skeletal muscle, testis and brain.

Its subcellular location is the nucleus. Transcriptional activator that regulates the tissue specific expression of multiple genes, especially in pancreas and liver. Binds to the hepatocyte specific promoter element HP1. Binds to the inverted palindrome 5'-GTTAATNATTAAC-3'. This Xenopus laevis (African clawed frog) protein is Hepatocyte nuclear factor 1-alpha-A (hnf1a-a).